A 319-amino-acid chain; its full sequence is ATP-dependent 6-phosphofructokinase (319 aa).

Gly11 serves as a coordination point for ATP. ADP is bound at residue 21–25 (RAVVR). Residues 72-73 (RC) and 102-105 (GDGS) contribute to the ATP site. Asp103 provides a ligand contact to Mg(2+). Substrate is bound at residue 125–127 (TID). The active-site Proton acceptor is Asp127. Arg154 lines the ADP pocket. Residues Arg162 and 169–171 (MGR) each bind substrate. ADP is bound by residues 185 to 187 (GAE), Arg211, and 213 to 215 (KKH). Substrate contacts are provided by residues Glu222, Arg243, and 249–252 (HVQR).

The protein belongs to the phosphofructokinase type A (PFKA) family. ATP-dependent PFK group I subfamily. Prokaryotic clade 'B1' sub-subfamily. Homotetramer. Requires Mg(2+) as cofactor.

The protein localises to the cytoplasm. The enzyme catalyses beta-D-fructose 6-phosphate + ATP = beta-D-fructose 1,6-bisphosphate + ADP + H(+). It functions in the pathway carbohydrate degradation; glycolysis; D-glyceraldehyde 3-phosphate and glycerone phosphate from D-glucose: step 3/4. Allosterically activated by ADP and other diphosphonucleosides, and allosterically inhibited by phosphoenolpyruvate. Catalyzes the phosphorylation of D-fructose 6-phosphate to fructose 1,6-bisphosphate by ATP, the first committing step of glycolysis. The sequence is that of ATP-dependent 6-phosphofructokinase from Anoxybacillus flavithermus (strain DSM 21510 / WK1).